A 494-amino-acid chain; its full sequence is MGSIRLDEISSIIRKQIEQYNNEVRVGNLGTVLQVGDGIARIHGLDEVMAGELVEFGDGTVGIALNLGSDNVGAVLMGDGLMIQEGSSVRATGKIAQIPVSDAYLGRVVNALAQPIDGKGKISASEFRLIESPAPGIISRRSVYEPLQTGLIAIDSMIPIGRGQRELIIGDRQTGKTAVATDTILNQKSQNVICVYVAIGQRASSVAQVVNTFRERGAMAYTIVVAETADSPATLQYLAPYTGATLAEYFMYKKQHTSIIYDDLSKQAQAYRQMSLLLRRPPGREAYPGDVFYLHSRLLERAAKLSSQLGEGSVTALPIVETQAGDVSAYIPTNAISITDGQIFSSADLFNAGIRPAINVGISVSRVGSAAQIKAMKKVAGKLKLELAQFAELEAFAQFASDLDKATQDQLARGQRLRELLKQSQSAPLTVEEQIATIYTGTNGYLDIFEIAQVRKFLLGLRFYLIKNKPQFGEIIRSTGTFTEEAKALLEEAL.

170–177 provides a ligand contact to ATP; that stretch reads GDRQTGKT.

Belongs to the ATPase alpha/beta chains family. In terms of assembly, F-type ATPases have 2 components, CF(1) - the catalytic core - and CF(0) - the membrane proton channel. CF(1) has five subunits: alpha(3), beta(3), gamma(1), delta(1), epsilon(1). CF(0) has four main subunits: a, b, b' and c.

It localises to the plastid. The protein resides in the chloroplast thylakoid membrane. It catalyses the reaction ATP + H2O + 4 H(+)(in) = ADP + phosphate + 5 H(+)(out). Functionally, produces ATP from ADP in the presence of a proton gradient across the membrane. The alpha chain is a regulatory subunit. In Pinus thunbergii (Japanese black pine), this protein is ATP synthase subunit alpha, chloroplastic.